The following is a 241-amino-acid chain: Fatty acid metabolism regulator protein (241 aa).

The HTH gntR-type domain occupies 11–79 (QSPAALAEEY…HGKPTKVNNI (69 aa)). Residues 39-58 (ERDLADKIGVTRTTLREVLQ) constitute a DNA-binding region (H-T-H motif).

In terms of assembly, homodimer.

It is found in the cytoplasm. In terms of biological role, multifunctional regulator of fatty acid metabolism. This chain is Fatty acid metabolism regulator protein, found in Haemophilus influenzae (strain ATCC 51907 / DSM 11121 / KW20 / Rd).